Reading from the N-terminus, the 291-residue chain is 4-hydroxy-tetrahydrodipicolinate synthase (291 aa).

Thr-44 lines the pyruvate pocket. The active-site Proton donor/acceptor is Tyr-132. Catalysis depends on Lys-160, which acts as the Schiff-base intermediate with substrate. Ile-202 provides a ligand contact to pyruvate.

The protein belongs to the DapA family. Homotetramer; dimer of dimers.

It localises to the cytoplasm. The enzyme catalyses L-aspartate 4-semialdehyde + pyruvate = (2S,4S)-4-hydroxy-2,3,4,5-tetrahydrodipicolinate + H2O + H(+). The protein operates within amino-acid biosynthesis; L-lysine biosynthesis via DAP pathway; (S)-tetrahydrodipicolinate from L-aspartate: step 3/4. Its function is as follows. Catalyzes the condensation of (S)-aspartate-beta-semialdehyde [(S)-ASA] and pyruvate to 4-hydroxy-tetrahydrodipicolinate (HTPA). The polypeptide is 4-hydroxy-tetrahydrodipicolinate synthase (Roseobacter denitrificans (strain ATCC 33942 / OCh 114) (Erythrobacter sp. (strain OCh 114))).